The chain runs to 242 residues: Lysosomal membrane ascorbate-dependent ferrireductase CYB561A3 (242 aa).

At 1 to 4 (MASG) the chain is on the cytoplasmic side. A helical transmembrane segment spans residues 5-25 (WFYLSCMVLGSLGSMCILFTA). Positions 12 to 219 (VLGSLGSMCI…FGLLVLYVLL (208 aa)) constitute a Cytochrome b561 domain. At 26–40 (YWMQYWRGGFAWDGT) the chain is on the lumenal side. The chain crosses the membrane as a helical span at residues 41 to 61 (VLMFNWHPVLMVAGMVVLYGA). Heme b-binding residues include His-47 and Arg-67. Over 62-81 (ASLVYRLPSSWVGPRLPWKV) the chain is Cytoplasmic. L-ascorbate contacts are provided by Arg-76 and Lys-80. A helical transmembrane segment spans residues 82–102 (LHAALHLLAFTCTVVGLIAVF). Heme b contacts are provided by residues His-83, 112–115 (HLYS), and His-117. Topologically, residues 103-119 (RFHNHSRIAHLYSLHSW) are lumenal. Residues 120–140 (LGITTVVLFACQWFLGFAVFL) form a helical membrane-spanning segment. Residues 141–154 (LPWASQWLRSLLKP) lie on the Cytoplasmic side of the membrane. Arg-149 provides a ligand contact to L-ascorbate. Residues 155 to 175 (LHVFFGACILSLSITSVISGI) traverse the membrane as a helical segment. His-156 and Glu-177 together coordinate heme b. The Lumenal portion of the chain corresponds to 176 to 202 (NEKLFFVLKNATKPYSSLPGEAVFANS). The helical transmembrane segment at 203-223 (TGLLVVAFGLLVLYVLLASSW) threads the bilayer. Lys-224 is a binding site for heme b. At 224–242 (KRPDPGALTDRQPLLHDRE) the chain is on the cytoplasmic side.

In terms of assembly, homodimer. Heme b serves as cofactor. In terms of processing, N-glycosylated. As to expression, present in lung, spleen, thymus and testis. Present at low level in brain, heart, liver and kidney. Expressed in the alveolar macrophages of the lung, in the white pulp of the spleen, widespread in the thymus, and in the Sertoli cells of the testis (at protein level).

The protein resides in the late endosome membrane. Its subcellular location is the lysosome membrane. It carries out the reaction Fe(3+)(out) + L-ascorbate(in) = monodehydro-L-ascorbate radical(in) + Fe(2+)(out) + H(+). Functionally, transmembrane reductase that uses ascorbate as an electron donor in the cytoplasm and transfers electrons across membranes to reduce iron cations Fe(3+) into Fe(2+) in the lumen of the late endosome and lysosome. Reduced iron can then be extruded from the late endosome and lysosome to the cytoplasm by divalent metal-specific transporters. It is therefore most probably involved in endosomal and lysosomal cellular iron homeostasis. In Mus musculus (Mouse), this protein is Lysosomal membrane ascorbate-dependent ferrireductase CYB561A3.